We begin with the raw amino-acid sequence, 216 residues long: Probable nicotinate-nucleotide adenylyltransferase (216 aa).

The protein belongs to the NadD family.

The catalysed reaction is nicotinate beta-D-ribonucleotide + ATP + H(+) = deamido-NAD(+) + diphosphate. Its pathway is cofactor biosynthesis; NAD(+) biosynthesis; deamido-NAD(+) from nicotinate D-ribonucleotide: step 1/1. Its function is as follows. Catalyzes the reversible adenylation of nicotinate mononucleotide (NaMN) to nicotinic acid adenine dinucleotide (NaAD). This Geotalea uraniireducens (strain Rf4) (Geobacter uraniireducens) protein is Probable nicotinate-nucleotide adenylyltransferase.